Consider the following 640-residue polypeptide: 1-deoxy-D-xylulose-5-phosphate synthase (640 aa).

Thiamine diphosphate is bound by residues H78 and 119 to 121 (GHS). Residue D151 coordinates Mg(2+). Residues 152 to 153 (GA), N180, Y289, and E371 each bind thiamine diphosphate. Mg(2+) is bound at residue N180.

The protein belongs to the transketolase family. DXPS subfamily. Homodimer. Mg(2+) serves as cofactor. It depends on thiamine diphosphate as a cofactor.

It carries out the reaction D-glyceraldehyde 3-phosphate + pyruvate + H(+) = 1-deoxy-D-xylulose 5-phosphate + CO2. The protein operates within metabolic intermediate biosynthesis; 1-deoxy-D-xylulose 5-phosphate biosynthesis; 1-deoxy-D-xylulose 5-phosphate from D-glyceraldehyde 3-phosphate and pyruvate: step 1/1. In terms of biological role, catalyzes the acyloin condensation reaction between C atoms 2 and 3 of pyruvate and glyceraldehyde 3-phosphate to yield 1-deoxy-D-xylulose-5-phosphate (DXP). The protein is 1-deoxy-D-xylulose-5-phosphate synthase of Bartonella quintana (strain Toulouse) (Rochalimaea quintana).